The following is a 175-amino-acid chain: uncharacterized protein (175 aa).

The N-terminal stretch at 1–23 is a signal peptide; sequence MILVLLLILIAFLYIYFPSSLNQ.

This is an uncharacterized protein from Invertebrate iridescent virus 6 (IIV-6).